A 141-amino-acid chain; its full sequence is MAIERTLSIIKPDAVAKNVIGQIYTRFENAGLKIVASRMVHLSRADAEKFYAVHAARPFFKDLVDFMISGPVVVQALEGENAILKHRDLMGATDPKKAEKGTIRADFADSIDANAVHGSDAPETAAVEIAFFFPQVNVYSR.

Residues Lys11, Phe59, Arg87, Thr93, Arg104, and Asn114 each coordinate ATP. Catalysis depends on His117, which acts as the Pros-phosphohistidine intermediate.

This sequence belongs to the NDK family. As to quaternary structure, homotetramer. Requires Mg(2+) as cofactor.

The protein localises to the cytoplasm. It catalyses the reaction a 2'-deoxyribonucleoside 5'-diphosphate + ATP = a 2'-deoxyribonucleoside 5'-triphosphate + ADP. It carries out the reaction a ribonucleoside 5'-diphosphate + ATP = a ribonucleoside 5'-triphosphate + ADP. Functionally, major role in the synthesis of nucleoside triphosphates other than ATP. The ATP gamma phosphate is transferred to the NDP beta phosphate via a ping-pong mechanism, using a phosphorylated active-site intermediate. The polypeptide is Nucleoside diphosphate kinase (Paraburkholderia xenovorans (strain LB400)).